Consider the following 441-residue polypeptide: Trigger factor (441 aa).

The 86-residue stretch at Gly163 to Ala248 folds into the PPIase FKBP-type domain.

It belongs to the FKBP-type PPIase family. Tig subfamily.

The protein resides in the cytoplasm. The enzyme catalyses [protein]-peptidylproline (omega=180) = [protein]-peptidylproline (omega=0). In terms of biological role, involved in protein export. Acts as a chaperone by maintaining the newly synthesized protein in an open conformation. Functions as a peptidyl-prolyl cis-trans isomerase. This is Trigger factor from Jannaschia sp. (strain CCS1).